The chain runs to 341 residues: D-erythrose-4-phosphate dehydrogenase (341 aa).

12-13 (RI) is a binding site for NAD(+). Substrate-binding positions include 154 to 156 (SCT), R200, 213 to 214 (TK), and R236. Catalysis depends on C155, which acts as the Nucleophile. N318 provides a ligand contact to NAD(+).

This sequence belongs to the glyceraldehyde-3-phosphate dehydrogenase family. Epd subfamily. Homotetramer.

The protein localises to the cytoplasm. The enzyme catalyses D-erythrose 4-phosphate + NAD(+) + H2O = 4-phospho-D-erythronate + NADH + 2 H(+). It participates in cofactor biosynthesis; pyridoxine 5'-phosphate biosynthesis; pyridoxine 5'-phosphate from D-erythrose 4-phosphate: step 1/5. Functionally, catalyzes the NAD-dependent conversion of D-erythrose 4-phosphate to 4-phosphoerythronate. The protein is D-erythrose-4-phosphate dehydrogenase of Edwardsiella ictaluri (strain 93-146).